Reading from the N-terminus, the 390-residue chain is Malonyl-CoA-acyl carrier protein transacylase, mitochondrial (390 aa).

The transit peptide at methionine 1–glycine 21 directs the protein to the mitochondrion. Catalysis depends on residues serine 153 and histidine 270. An N6-succinyllysine modification is found at lysine 314.

Belongs to the type II malonyltransferase family.

The protein resides in the mitochondrion. The enzyme catalyses holo-[ACP] + malonyl-CoA = malonyl-[ACP] + CoA. Its pathway is lipid metabolism; fatty acid biosynthesis. Functionally, catalyzes the transfer of a malonyl moiety from malonyl-CoA to the free thiol group of the phosphopantetheine arm of the mitochondrial ACP protein (NDUFAB1). This suggests the existence of the biosynthesis of fatty acids in mitochondria. Also acts as a mitochondrial small ribosomal subunit (mt-SSU) assembly factor. This is Malonyl-CoA-acyl carrier protein transacylase, mitochondrial from Homo sapiens (Human).